The sequence spans 2092 residues: Nonribosomal peptide synthetase echPS (2092 aa).

The adenylation 1 stretch occupies residues 13–406; the sequence is FSQRCCQNPD…GRRDRVTKIR (394 aa). In terms of domain architecture, Carrier 1 spans 524-600; it reads SGPLTIGQAI…SLIEKSRHET (77 aa). S561 is subject to O-(pantetheine 4'-phosphoryl)serine. Residues 596 to 626 form a disordered region; that stretch reads SRHETEDTPDSSAFATRTPEESSMPTQGPVT. A compositionally biased stretch (polar residues) spans 605 to 624; the sequence is DSSAFATRTPEESSMPTQGP. A condensation 1 region spans residues 624–1017; it reads PVTPLQKRMV…YTSLLDAFLD (394 aa). The tract at residues 1068–1446 is adenylation 2; that stretch reads ASLYPTHVAV…GRKDRQVKVR (379 aa). The 79-residue stretch at 1544 to 1622 folds into the Carrier 2 domain; that stretch reads IKTTHLEKLI…DLVILVAQQQ (79 aa). S1582 is modified (O-(pantetheine 4'-phosphoryl)serine). The interval 1663–2047 is condensation 2; sequence SQSQSTFNVS…EALLLECFRI (385 aa).

The protein belongs to the NRP synthetase family. Requires pantetheine 4'-phosphate as cofactor.

The catalysed reaction is L-tryptophan + L-alanine + 2 ATP = cyclo(L-tryptophyl-L-alanyl) + 2 ADP + 2 phosphate + 2 H(+). Its pathway is secondary metabolite biosynthesis. It functions in the pathway alkaloid biosynthesis. In terms of biological role, nonribosomal peptide synthetase; part of the gene cluster that mediates the biosynthesis of echinulin family alkaloid. The pathway begins with the biosynthesis of the cyclic dipeptide cyclo-L-Trp-L-Ala (cyclo-TA) by the NRPS echPS via condensation of L-alanine and L-tryptophan. The prenyltransferase echPT1 then catalyzes the first prenylation step, a reverse prenylation reaction at C2, to yield preechinulin. Preechinulin is the substrate of the cytochrome P450 monooxygenase echP450 that catalyzes the formation of the double bond between C10 and C11 to produce neoechulin A. The unique prenyltransferase echPT2 functions as a competitive enzyme with echP450 for preechinulin metabolization and uses preechinulin for effective regiospecific prenylations. Preechinulin is prenylated by echPT2 at C5 or C7. C7-prenylation leads to accumulation of tardioxopiperazine B without further modification by echPT2. In contrast, the C5-prenylated tardioxopiperazine A can be prenylated again by echPT2, predominantly at C7 to form echinulin or less frequently at C4 to give variecolorin L. EchPT2 also accepts neoechilunin A to produce varlecolorin G (prenylation at C5) or isoechinulin A (prenylation at C7). EchPT2 further converts isoechinulin A into dehydroechinulin. Moreover, a yet unidentified enzyme can also convert neoechilunin A into neoechilunin B by introducing a double bond between positions C14 and C17 and thus provides a further substrate to echPT2 for C5 and C7 prenylation. The protein is Nonribosomal peptide synthetase echPS of Aspergillus ruber (strain CBS 135680).